Reading from the N-terminus, the 347-residue chain is Quinolinate synthase (347 aa).

Iminosuccinate-binding residues include His-47 and Ser-68. [4Fe-4S] cluster is bound at residue Cys-113. Residues 139-141 (YAN) and Ser-156 contribute to the iminosuccinate site. Residue Cys-200 participates in [4Fe-4S] cluster binding. Residues 226–228 (HPE) and Thr-243 each bind iminosuccinate. Cys-297 is a [4Fe-4S] cluster binding site.

It belongs to the quinolinate synthase family. Type 1 subfamily. [4Fe-4S] cluster serves as cofactor.

Its subcellular location is the cytoplasm. The catalysed reaction is iminosuccinate + dihydroxyacetone phosphate = quinolinate + phosphate + 2 H2O + H(+). The protein operates within cofactor biosynthesis; NAD(+) biosynthesis; quinolinate from iminoaspartate: step 1/1. Its function is as follows. Catalyzes the condensation of iminoaspartate with dihydroxyacetone phosphate to form quinolinate. The chain is Quinolinate synthase from Salmonella enteritidis PT4 (strain P125109).